The chain runs to 142 residues: Large ribosomal subunit protein uL11 (142 aa).

It belongs to the universal ribosomal protein uL11 family. As to quaternary structure, part of the ribosomal stalk of the 50S ribosomal subunit. Interacts with L10 and the large rRNA to form the base of the stalk. L10 forms an elongated spine to which L12 dimers bind in a sequential fashion forming a multimeric L10(L12)X complex. Post-translationally, one or more lysine residues are methylated.

Functionally, forms part of the ribosomal stalk which helps the ribosome interact with GTP-bound translation factors. This chain is Large ribosomal subunit protein uL11, found in Mycobacteroides abscessus (strain ATCC 19977 / DSM 44196 / CCUG 20993 / CIP 104536 / JCM 13569 / NCTC 13031 / TMC 1543 / L948) (Mycobacterium abscessus).